The chain runs to 205 residues: uncharacterized protein (205 aa).

The HTH tetR-type domain maps to 11–71 (DKRQAEILEA…RIIETGLDEG (61 aa)). Positions 34–53 (TMKDVVEESGFSRGGVYLYF) form a DNA-binding region, H-T-H motif.

This is an uncharacterized protein from Bacillus subtilis (strain 168).